Reading from the N-terminus, the 150-residue chain is Anthrone oxygenase gedH (150 aa).

4 helical membrane-spanning segments follow: residues 1-21 (MANP…PVFL), 41-61 (GHKL…WVAA), 73-93 (PVLA…CMVS), and 128-148 (LFPL…LVGG).

It belongs to the anthrone oxygenase family.

It localises to the membrane. It carries out the reaction emodin anthrone + O2 = emodin + H2O + H(+). The protein operates within secondary metabolite biosynthesis. Its function is as follows. Anthrone oxygenase; part of the gene cluster that mediates the biosynthesis of geodin, an intermediate in the biosynthesis of other natural products. The pathway begins with the synthesis of atrochrysone thioester by the polyketide synthase (PKS) gedC. The atrochrysone carboxyl ACP thioesterase gedB then breaks the thioester bond and releases the atrochrysone carboxylic acid from gedC. The atrochrysone carboxylic acid is then converted to atrochrysone which is further transformed into emodin anthrone. The next step is performed by the emodin anthrone oxygenase gedH that catalyzes the oxidation of emodinanthrone to emodin. Emodin O-methyltransferase encoded probably by gedA then catalyzes methylation of the 8-hydroxy group of emodin to form questin. Ring cleavage of questin by questin oxidase gedK leads to desmethylsulochrin via several intermediates including questin epoxide. Another methylation step probably catalyzed by methyltransferase gedG leads to the formation of sulochrin which is further converted to dihydrogeodin by the sulochrin halogenase gedL. Finally, the dihydrogeodin oxidase gedJ catalyzes the stereospecific phenol oxidative coupling reaction converting dihydrogeodin to geodin. The sequence is that of Anthrone oxygenase gedH from Aspergillus terreus (strain NIH 2624 / FGSC A1156).